The primary structure comprises 347 residues: Protein RecA (347 aa).

Position 70–77 (70–77 (GPESSGKT)) interacts with ATP.

Belongs to the RecA family.

The protein localises to the cytoplasm. Its function is as follows. Can catalyze the hydrolysis of ATP in the presence of single-stranded DNA, the ATP-dependent uptake of single-stranded DNA by duplex DNA, and the ATP-dependent hybridization of homologous single-stranded DNAs. It interacts with LexA causing its activation and leading to its autocatalytic cleavage. This chain is Protein RecA, found in Ruegeria pomeroyi (strain ATCC 700808 / DSM 15171 / DSS-3) (Silicibacter pomeroyi).